The sequence spans 369 residues: MHGESPIKRRESRKIWVGSVPVGGDAPIAVQSMTNSDTNDVAATVAQINRLEAAGVDIVRVSVPDMDAAEAFGRIKQQVKVPLVADIHFDYKIALRVAELGVDCLRINPGNIGREDRVRAVVDAARDRGIPIRIGVNAGSLEKDLQKKYGEPTPAALVESALRHVEHLERLNFKDFKVSVKASDVFMAVEAYRLLAKEIIQPLHLGITEAGGLRSGTVKSAVGLGMLLAEGIGDTIRISLAADPVEEVKVGYDILKSLHLRSRGINFIACPSCSRQNFDVVKTMNELEGRLEDLLVPLDVAVIGCVVNGPGEAKEAHIGLTGGTPNLIYIDGKPAQKLTNDNLVDELEKLIRQKAAEKVEADAALIARG.

Positions 270, 273, 305, and 312 each coordinate [4Fe-4S] cluster.

It belongs to the IspG family. Requires [4Fe-4S] cluster as cofactor.

It catalyses the reaction (2E)-4-hydroxy-3-methylbut-2-enyl diphosphate + oxidized [flavodoxin] + H2O + 2 H(+) = 2-C-methyl-D-erythritol 2,4-cyclic diphosphate + reduced [flavodoxin]. It participates in isoprenoid biosynthesis; isopentenyl diphosphate biosynthesis via DXP pathway; isopentenyl diphosphate from 1-deoxy-D-xylulose 5-phosphate: step 5/6. Functionally, converts 2C-methyl-D-erythritol 2,4-cyclodiphosphate (ME-2,4cPP) into 1-hydroxy-2-methyl-2-(E)-butenyl 4-diphosphate. The polypeptide is 4-hydroxy-3-methylbut-2-en-1-yl diphosphate synthase (flavodoxin) (Pseudomonas fluorescens (strain ATCC BAA-477 / NRRL B-23932 / Pf-5)).